A 603-amino-acid chain; its full sequence is Penicillin-binding protein activator LpoA (603 aa).

Positions 1 to 26 (MANMTPRKNSVTRLIAPVALALTLAA) are cleaved as a signal peptide. C27 carries N-palmitoyl cysteine lipidation. C27 carries S-diacylglycerol cysteine lipidation.

This sequence belongs to the LpoA family. In terms of assembly, interacts with PBP1a.

The protein localises to the cell outer membrane. Functionally, regulator of peptidoglycan synthesis that is essential for the function of penicillin-binding protein 1A (PBP1a). This chain is Penicillin-binding protein activator LpoA, found in Aliivibrio fischeri (strain ATCC 700601 / ES114) (Vibrio fischeri).